A 420-amino-acid chain; its full sequence is Putative phosphate permease HI_1604 (420 aa).

12 consecutive transmembrane segments (helical) span residues 8–28 (GSWL…GIGA), 49–69 (AIII…GEVT), 88–108 (ILAL…FIAT), 112–132 (WPVS…CITI), 145–165 (IVGS…AIFA), 185–205 (GPYY…KKGL), 216–236 (ETLI…HFYF), 250–270 (FGAV…AMAF), 300–320 (GGAL…VGLI), 343–363 (FAAQ…GLPI), 370–390 (VGAI…LTVI), and 393–413 (IISS…IIFY).

It belongs to the inorganic phosphate transporter (PiT) (TC 2.A.20) family.

It is found in the cell inner membrane. Its function is as follows. Potential transporter for phosphate. The chain is Putative phosphate permease HI_1604 from Haemophilus influenzae (strain ATCC 51907 / DSM 11121 / KW20 / Rd).